A 338-amino-acid chain; its full sequence is Ketol-acid reductoisomerase (NADP(+)) (338 aa).

The KARI N-terminal Rossmann domain occupies 2–182 (TKMYYEEDTD…GGARAGVLET (181 aa)). NADP(+) is bound by residues 25–28 (YGSQ), serine 51, serine 53, and 83–86 (DELQ). Histidine 108 is an active-site residue. Glycine 134 serves as a coordination point for NADP(+). The KARI C-terminal knotted domain occupies 183-330 (TFRTETETDL…SEIRKLYCWN (148 aa)). Mg(2+) contacts are provided by aspartate 191, glutamate 195, glutamate 227, and glutamate 231. Serine 252 is a binding site for substrate.

The protein belongs to the ketol-acid reductoisomerase family. It depends on Mg(2+) as a cofactor.

It catalyses the reaction (2R)-2,3-dihydroxy-3-methylbutanoate + NADP(+) = (2S)-2-acetolactate + NADPH + H(+). The catalysed reaction is (2R,3R)-2,3-dihydroxy-3-methylpentanoate + NADP(+) = (S)-2-ethyl-2-hydroxy-3-oxobutanoate + NADPH + H(+). It participates in amino-acid biosynthesis; L-isoleucine biosynthesis; L-isoleucine from 2-oxobutanoate: step 2/4. Its pathway is amino-acid biosynthesis; L-valine biosynthesis; L-valine from pyruvate: step 2/4. In terms of biological role, involved in the biosynthesis of branched-chain amino acids (BCAA). Catalyzes an alkyl-migration followed by a ketol-acid reduction of (S)-2-acetolactate (S2AL) to yield (R)-2,3-dihydroxy-isovalerate. In the isomerase reaction, S2AL is rearranged via a Mg-dependent methyl migration to produce 3-hydroxy-3-methyl-2-ketobutyrate (HMKB). In the reductase reaction, this 2-ketoacid undergoes a metal-dependent reduction by NADPH to yield (R)-2,3-dihydroxy-isovalerate. This Clostridium botulinum (strain Eklund 17B / Type B) protein is Ketol-acid reductoisomerase (NADP(+)).